The chain runs to 113 residues: UPF0145 protein TK1926 (113 aa).

This sequence belongs to the UPF0145 family.

The chain is UPF0145 protein TK1926 from Thermococcus kodakarensis (strain ATCC BAA-918 / JCM 12380 / KOD1) (Pyrococcus kodakaraensis (strain KOD1)).